The sequence spans 286 residues: Pyridoxal kinase PdxY (286 aa).

Substrate contacts are provided by residues S9 and 44-45 (TQ). Residues D111, A143, E148, K181, and 208–211 (RPLV) contribute to the ATP site. Substrate is bound at residue D223.

Belongs to the pyridoxine kinase family. PdxY subfamily. In terms of assembly, homodimer. Mg(2+) serves as cofactor.

The enzyme catalyses pyridoxal + ATP = pyridoxal 5'-phosphate + ADP + H(+). It participates in cofactor metabolism; pyridoxal 5'-phosphate salvage; pyridoxal 5'-phosphate from pyridoxal: step 1/1. Its function is as follows. Pyridoxal kinase involved in the salvage pathway of pyridoxal 5'-phosphate (PLP). Catalyzes the phosphorylation of pyridoxal to PLP. The protein is Pyridoxal kinase PdxY of Yersinia pestis bv. Antiqua (strain Antiqua).